A 299-amino-acid polypeptide reads, in one-letter code: Coenzyme PQQ synthesis protein B (299 aa).

This sequence belongs to the PqqB family.

It functions in the pathway cofactor biosynthesis; pyrroloquinoline quinone biosynthesis. Functionally, may be involved in the transport of PQQ or its precursor to the periplasm. The chain is Coenzyme PQQ synthesis protein B from Methylobacterium nodulans (strain LMG 21967 / CNCM I-2342 / ORS 2060).